Here is a 327-residue protein sequence, read N- to C-terminus: Eukaryotic translation initiation factor 3 subunit I (327 aa).

WD repeat units lie at residues 8 to 49 (GHDR…GTYD), 51 to 91 (HNGV…NSVS), 144 to 183 (SLQTQANSCVWTHLDDTVCVGNEKGNVHQYDIRKGDDIVN), 188 to 227 (AHKFQINDMQMSTDESFLITASKDKTARLFDARTLDCLKT), 229 to 268 (KAERPVNSAAISPIRDHVILGGGEEAMKVTQTTAASGHFE), and 285 to 324 (GHFGPINTLAFHPGGNCVVSGGEDGYVRIQEFDTDYLKFD).

This sequence belongs to the eIF-3 subunit I family. As to quaternary structure, component of the eukaryotic translation initiation factor 3 (eIF-3) complex.

Its subcellular location is the cytoplasm. Component of the eukaryotic translation initiation factor 3 (eIF-3) complex, which is involved in protein synthesis of a specialized repertoire of mRNAs and, together with other initiation factors, stimulates binding of mRNA and methionyl-tRNAi to the 40S ribosome. The eIF-3 complex specifically targets and initiates translation of a subset of mRNAs involved in cell proliferation. The polypeptide is Eukaryotic translation initiation factor 3 subunit I (Brugia malayi (Filarial nematode worm)).